Reading from the N-terminus, the 188-residue chain is Protein TIFY 9 (188 aa).

The disordered stretch occupies residues 20-41; the sequence is DADDRHAKSGGSSASSSSSIRG. Positions 28 to 38 are enriched in low complexity; it reads SGGSSASSSSS. Residues 80–114 form the Tify domain; sequence AAAAAAPMTLFYNGSVAVFDVSHDKAEAIMRMATE. The short motif at 135 to 160 is the Jas element; that stretch reads PLTRTKSLQRFLSKRKERLTSLGPYQ. A disordered region spans residues 156 to 188; it reads LGPYQVGGPAAVGATTSTTTKSFLAKEEEHTAS. The segment covering 179–188 has biased composition (basic and acidic residues); sequence LAKEEEHTAS.

The protein belongs to the TIFY/JAZ family. In terms of processing, ubiquitinated. Targeted for degradation by the SCF(COI1) E3 ubiquitin ligase-proteasome pathway during jasmonate signaling.

In terms of biological role, repressor of jasmonate responses. The sequence is that of Protein TIFY 9 from Oryza sativa subsp. indica (Rice).